Reading from the N-terminus, the 89-residue chain is Small ribosomal subunit protein uS15 (89 aa).

This sequence belongs to the universal ribosomal protein uS15 family. In terms of assembly, part of the 30S ribosomal subunit. Forms a bridge to the 50S subunit in the 70S ribosome, contacting the 23S rRNA.

One of the primary rRNA binding proteins, it binds directly to 16S rRNA where it helps nucleate assembly of the platform of the 30S subunit by binding and bridging several RNA helices of the 16S rRNA. Its function is as follows. Forms an intersubunit bridge (bridge B4) with the 23S rRNA of the 50S subunit in the ribosome. This is Small ribosomal subunit protein uS15 from Acinetobacter baumannii (strain AB307-0294).